The chain runs to 673 residues: Bifunctional lycopene cyclase/phytoene synthase (673 aa).

The segment at 1-251 (MTALAYYQIH…IVLGLSACDH (251 aa)) is lycopene beta-cyclase. 7 helical membrane-spanning segments follow: residues 9-29 (IHLI…SPIL), 36-56 (KISI…SWII), 81-101 (YEEY…YVLA), 117-137 (SALS…LFTA), 157-177 (LSLL…EYAF), 187-207 (TIAA…VAVG), and 226-246 (VLPI…VLGL). Positions 258–673 (LHGRTIYGNK…SVVMSGWEGQ (416 aa)) are phytoene synthase. Residues 376 to 399 (KILSSPLLPPSHPSRPTGMYPLPP) form a disordered region.

In the N-terminal section; belongs to the lycopene beta-cyclase family. This sequence in the C-terminal section; belongs to the phytoene/squalene synthase family.

It localises to the membrane. It catalyses the reaction all-trans-lycopene = gamma-carotene. It carries out the reaction gamma-carotene = all-trans-beta-carotene. The catalysed reaction is 2 (2E,6E,10E)-geranylgeranyl diphosphate = 15-cis-phytoene + 2 diphosphate. Its pathway is carotenoid biosynthesis; beta-carotene biosynthesis. It participates in carotenoid biosynthesis; phytoene biosynthesis; all-trans-phytoene from geranylgeranyl diphosphate: step 1/1. Bifunctional enzyme that catalyzes the reactions from geranylgeranyl diphosphate to phytoene (phytoene synthase) and lycopene to beta-carotene via the intermediate gamma-carotene (lycopene cyclase). The cyclase preferentially catalyzes the symmetric cyclization of both ends of the substrate to produce dicyclic carotenoids. Beta-carotene is further processed to the acidic carotenoid astaxanthin. This is Bifunctional lycopene cyclase/phytoene synthase from Phaffia rhodozyma (Yeast).